The chain runs to 271 residues: Acetyl-coenzyme A carboxylase carboxyl transferase subunit alpha (271 aa).

The CoA carboxyltransferase C-terminal domain occupies 1-247 (MSRELIRTVD…KKTILEALGE (247 aa)).

Belongs to the AccA family. As to quaternary structure, acetyl-CoA carboxylase is a heterohexamer composed of biotin carboxyl carrier protein (AccB), biotin carboxylase (AccC) and two subunits each of ACCase subunit alpha (AccA) and ACCase subunit beta (AccD).

It localises to the cytoplasm. The enzyme catalyses N(6)-carboxybiotinyl-L-lysyl-[protein] + acetyl-CoA = N(6)-biotinyl-L-lysyl-[protein] + malonyl-CoA. It functions in the pathway lipid metabolism; malonyl-CoA biosynthesis; malonyl-CoA from acetyl-CoA: step 1/1. Its function is as follows. Component of the acetyl coenzyme A carboxylase (ACC) complex. First, biotin carboxylase catalyzes the carboxylation of biotin on its carrier protein (BCCP) and then the CO(2) group is transferred by the carboxyltransferase to acetyl-CoA to form malonyl-CoA. This chain is Acetyl-coenzyme A carboxylase carboxyl transferase subunit alpha, found in Clostridium perfringens (strain SM101 / Type A).